A 179-amino-acid chain; its full sequence is MPSSSALLCCLVFLAGVAASRDASTLSDSSCTQFPTSLPHMLRELRAAFSRVKTFFQMKDQLDSLLLTQSLLDDFKGYLGCQALSEMIQFYLEEVMPQAENHGPDIKEHVNSLGEKLKTLRLRLRRCHRFLPCENKSKAVEQVKRAFSKLQDRGVYKAMSEFDIFINYIETYVTTKMQK.

An N-terminal signal peptide occupies residues 1–19 (MPSSSALLCCLVFLAGVAA). 2 disulfide bridges follow: Cys-31–Cys-127 and Cys-81–Cys-133. N-linked (GlcNAc...) asparagine glycosylation is present at Asn-135.

This sequence belongs to the IL-10 family. In terms of assembly, homodimer. Interacts with IL10RA and IL10RB.

The protein localises to the secreted. Functionally, major immune regulatory cytokine that acts on many cells of the immune system where it has profound anti-inflammatory functions, limiting excessive tissue disruption caused by inflammation. Mechanistically, IL10 binds to its heterotetrameric receptor comprising IL10RA and IL10RB leading to JAK1 and STAT2-mediated phosphorylation of STAT3. In turn, STAT3 translocates to the nucleus where it drives expression of anti-inflammatory mediators. Targets antigen-presenting cells (APCs) such as macrophages and monocytes and inhibits their release of pro-inflammatory cytokines including granulocyte-macrophage colony-stimulating factor /GM-CSF, granulocyte colony-stimulating factor/G-CSF, IL-1 alpha, IL-1 beta, IL-6, IL-8 and TNF-alpha. Also interferes with antigen presentation by reducing the expression of MHC-class II and co-stimulatory molecules, thereby inhibiting their ability to induce T cell activation. In addition, controls the inflammatory response of macrophages by reprogramming essential metabolic pathways including mTOR signaling. In Bubalus carabanensis (Swamp type water buffalo), this protein is Interleukin-10 (IL10).